Consider the following 274-residue polypeptide: Large ribosomal subunit protein uL2 (274 aa).

The disordered stretch occupies residues 200-274 (HALEKSGKAG…SKYIIERRKK (75 aa)). 2 stretches are compositionally biased toward basic residues: residues 207 to 220 (KAGRSRWLGRRPRN) and 255 to 274 (LKTRAPKKHSSKYIIERRKK).

The protein belongs to the universal ribosomal protein uL2 family. As to quaternary structure, part of the 50S ribosomal subunit. Forms a bridge to the 30S subunit in the 70S ribosome.

Functionally, one of the primary rRNA binding proteins. Required for association of the 30S and 50S subunits to form the 70S ribosome, for tRNA binding and peptide bond formation. It has been suggested to have peptidyltransferase activity; this is somewhat controversial. Makes several contacts with the 16S rRNA in the 70S ribosome. This chain is Large ribosomal subunit protein uL2, found in Parabacteroides distasonis (strain ATCC 8503 / DSM 20701 / CIP 104284 / JCM 5825 / NCTC 11152).